The following is a 163-amino-acid chain: 6,7-dimethyl-8-ribityllumazine synthase (163 aa).

Residues F27, 58 to 60, and 87 to 89 each bind 5-amino-6-(D-ribitylamino)uracil; these read ALE and CVI. 92-93 contributes to the (2S)-2-hydroxy-3-oxobutyl phosphate binding site; the sequence is DT. The active-site Proton donor is the H95. N120 is a 5-amino-6-(D-ribitylamino)uracil binding site. R134 lines the (2S)-2-hydroxy-3-oxobutyl phosphate pocket.

The protein belongs to the DMRL synthase family.

The enzyme catalyses (2S)-2-hydroxy-3-oxobutyl phosphate + 5-amino-6-(D-ribitylamino)uracil = 6,7-dimethyl-8-(1-D-ribityl)lumazine + phosphate + 2 H2O + H(+). Its pathway is cofactor biosynthesis; riboflavin biosynthesis; riboflavin from 2-hydroxy-3-oxobutyl phosphate and 5-amino-6-(D-ribitylamino)uracil: step 1/2. In terms of biological role, catalyzes the formation of 6,7-dimethyl-8-ribityllumazine by condensation of 5-amino-6-(D-ribitylamino)uracil with 3,4-dihydroxy-2-butanone 4-phosphate. This is the penultimate step in the biosynthesis of riboflavin. The polypeptide is 6,7-dimethyl-8-ribityllumazine synthase (Afipia carboxidovorans (strain ATCC 49405 / DSM 1227 / KCTC 32145 / OM5) (Oligotropha carboxidovorans)).